The primary structure comprises 202 residues: Osteoclast-stimulating factor 1 (202 aa).

The region spanning 12–71 (GQVKVFRALYTFEPRTPDELYFEEGDIIYISDMSDTNWWKGTCKGRTGLIPSNYVAEQAE) is the SH3 domain. ANK repeat units follow at residues 72–101 (SIDNPLHEAAKRGNLSWLRECLDNQVGVNG), 105–135 (AGNTALYWACHGGHKDIVDVLFTQANLELNQ), and 139–168 (LGDTALHAAAWKGYADIVEMLLAKGARTDL).

Its subcellular location is the cytoplasm. Functionally, induces bone resorption, acting probably through a signaling cascade which results in the secretion of factor(s) enhancing osteoclast formation and activity. The protein is Osteoclast-stimulating factor 1 (OSTF1) of Gallus gallus (Chicken).